The primary structure comprises 279 residues: Elongation factor Ts (279 aa).

Residues 80–83 (TDFV) are involved in Mg(2+) ion dislocation from EF-Tu.

Belongs to the EF-Ts family.

It is found in the cytoplasm. In terms of biological role, associates with the EF-Tu.GDP complex and induces the exchange of GDP to GTP. It remains bound to the aminoacyl-tRNA.EF-Tu.GTP complex up to the GTP hydrolysis stage on the ribosome. The polypeptide is Elongation factor Ts (Borreliella burgdorferi (strain ZS7) (Borrelia burgdorferi)).